The primary structure comprises 378 residues: Dual-specificity RNA methyltransferase RlmN (378 aa).

E96 serves as the catalytic Proton acceptor. Residues Q102 to D342 form the Radical SAM core domain. An intrachain disulfide couples C109 to C345. 3 residues coordinate [4Fe-4S] cluster: C116, C120, and C123. Residues G170–E171, S202, S224–H226, and N302 contribute to the S-adenosyl-L-methionine site. C345 functions as the S-methylcysteine intermediate in the catalytic mechanism.

It belongs to the radical SAM superfamily. RlmN family. It depends on [4Fe-4S] cluster as a cofactor.

It is found in the cytoplasm. It carries out the reaction adenosine(2503) in 23S rRNA + 2 reduced [2Fe-2S]-[ferredoxin] + 2 S-adenosyl-L-methionine = 2-methyladenosine(2503) in 23S rRNA + 5'-deoxyadenosine + L-methionine + 2 oxidized [2Fe-2S]-[ferredoxin] + S-adenosyl-L-homocysteine. The enzyme catalyses adenosine(37) in tRNA + 2 reduced [2Fe-2S]-[ferredoxin] + 2 S-adenosyl-L-methionine = 2-methyladenosine(37) in tRNA + 5'-deoxyadenosine + L-methionine + 2 oxidized [2Fe-2S]-[ferredoxin] + S-adenosyl-L-homocysteine. In terms of biological role, specifically methylates position 2 of adenine 2503 in 23S rRNA and position 2 of adenine 37 in tRNAs. m2A2503 modification seems to play a crucial role in the proofreading step occurring at the peptidyl transferase center and thus would serve to optimize ribosomal fidelity. This is Dual-specificity RNA methyltransferase RlmN from Pseudomonas paraeruginosa (strain DSM 24068 / PA7) (Pseudomonas aeruginosa (strain PA7)).